The sequence spans 299 residues: Transcription termination/antitermination protein NusG (299 aa).

Positions 30–96 (DPDEAELADA…APVEPAEPVD (67 aa)) are disordered. A run of 2 repeats spans residues 46–49 (EEAA) and 70–73 (EEAA). The tract at residues 46–87 (EEAALHVESDEDEDEADVEVDAAVEEAADDAEVAEEEAEEAA) is 4 X 4 AA repeats of E-E-A-A. Positions 54–87 (SDEDEDEADVEVDAAVEEAADDAEVAEEEAEEAA) are enriched in acidic residues. One copy of the 3; approximate repeat lies at 80–83 (EEEA). Repeat unit 4 spans residues 84–87 (EEAA). The KOW domain occupies 248 to 276 (VGDSVTVTDGPFATLQATINEINPDSKKV).

The protein belongs to the NusG family. In terms of processing, the N-terminus is blocked.

In terms of biological role, participates in transcription elongation, termination and antitermination. The protein is Transcription termination/antitermination protein NusG of Streptomyces virginiae (Streptomyces cinnamonensis).